The sequence spans 502 residues: Glycerol kinase (502 aa).

Residue T14 participates in ADP binding. ATP is bound by residues T14, T15, and S16. Position 14 (T14) interacts with sn-glycerol 3-phosphate. R18 is an ADP binding site. R84, E85, Y136, and D246 together coordinate sn-glycerol 3-phosphate. Residues R84, E85, Y136, D246, and Q247 each contribute to the glycerol site. ADP contacts are provided by T268 and G311. Residues T268, G311, Q315, and G412 each contribute to the ATP site. The ADP site is built by G412 and N416.

Belongs to the FGGY kinase family. Homotetramer and homodimer (in equilibrium). Heterodimer with EIIA-Glc. Binds 1 zinc ion per glycerol kinase EIIA-Glc dimer. The zinc ion is important for dimerization.

It carries out the reaction glycerol + ATP = sn-glycerol 3-phosphate + ADP + H(+). The protein operates within polyol metabolism; glycerol degradation via glycerol kinase pathway; sn-glycerol 3-phosphate from glycerol: step 1/1. With respect to regulation, activity of this regulatory enzyme is affected by several metabolites. Allosterically and non-competitively inhibited by fructose 1,6-bisphosphate (FBP) and unphosphorylated phosphocarrier protein EIIA-Glc (III-Glc), an integral component of the bacterial phosphotransferase (PTS) system. In terms of biological role, key enzyme in the regulation of glycerol uptake and metabolism. Catalyzes the phosphorylation of glycerol to yield sn-glycerol 3-phosphate. This is Glycerol kinase from Escherichia coli O8 (strain IAI1).